A 156-amino-acid polypeptide reads, in one-letter code: Transcription antitermination protein NusB (156 aa).

The protein belongs to the NusB family.

Its function is as follows. Involved in transcription antitermination. Required for transcription of ribosomal RNA (rRNA) genes. Binds specifically to the boxA antiterminator sequence of the ribosomal RNA (rrn) operons. This Syntrophotalea carbinolica (strain DSM 2380 / NBRC 103641 / GraBd1) (Pelobacter carbinolicus) protein is Transcription antitermination protein NusB.